We begin with the raw amino-acid sequence, 444 residues long: MTTRKTASSLQLLGKITGTKAGTKQKKMNFINGLIWLYMCVWMVHGKVTQKDELKWNKGYSLPNLLEVTDQQKELSQWTLGDKVKLEEGRFVLTPGKNTKGSLWLKPEYSIKDAMTIEWTFRSFGFRGSTKGGLAFWLKQGNEGDSTELFGGSSKKFNGLMILLRLDDKLGESVTAYLNDGTKDLDIESSPYFASCLFQYQDSMVPSTLRLTYNPLDNHLLKLQMDNRVCFQTRKVKFMGSSPFRIGTSAINDASKESFEILKMKLYDGVIEDSLIPNVNPMGQPRVVTKVINSQTGEESFREKMPFSDKEESITSNELFEKMNKLEGKIMANDIDPLLRKMNKIVENERELIQRLRPLLDLKKTAISDDSFQDFLSMNANLDRLIKEQEKIRQDAKLYGKQTKGHDEIFSKISVWLALLIFIMITLAYYMFRINQDIKKVKLL.

Residues 1 to 46 form the signal peptide; it reads MTTRKTASSLQLLGKITGTKAGTKQKKMNFINGLIWLYMCVWMVHG. Topologically, residues 47 to 408 are lumenal; that stretch reads KVTQKDELKW…YGKQTKGHDE (362 aa). The region spanning 52-269 is the L-type lectin-like domain; it reads DELKWNKGYS…EILKMKLYDG (218 aa). Tyrosine 177 lines the K(+) pocket. Cysteine 196 and cysteine 230 form a disulfide bridge. A helical transmembrane segment spans residues 409-429; it reads IFSKISVWLALLIFIMITLAY. Residues 429-432 are mediates the interactions with COPI and COPII coat complexes; it reads YYMF. Topologically, residues 430–444 are cytoplasmic; the sequence is YMFRINQDIKKVKLL. Positions 440-444 match the Di-lysine motif motif; sequence KVKLL.

This sequence belongs to the EMP46/EMP47 family. In terms of assembly, interacts with EMP47 in the endoplasmic reticulum membrane in order to be transported to the Golgi apparatus. Interacts with the coatomer proteins COP1, SEC21 and SEC23.

It localises to the golgi apparatus membrane. The protein resides in the endoplasmic reticulum membrane. In terms of biological role, involved in the secretion of glycoproteins and in nucleus architecture and gene silencing. The protein is Protein EMP46 (EMP46) of Saccharomyces cerevisiae (strain ATCC 204508 / S288c) (Baker's yeast).